The chain runs to 331 residues: Adenosine deaminase (331 aa).

Zn(2+) contacts are provided by His12 and His14. Positions 14, 16, and 170 each coordinate substrate. His197 is a binding site for Zn(2+). The active-site Proton donor is Glu200. Residue Asp278 participates in Zn(2+) binding. Asp279 lines the substrate pocket.

It belongs to the metallo-dependent hydrolases superfamily. Adenosine and AMP deaminases family. Adenosine deaminase subfamily. Zn(2+) is required as a cofactor.

The enzyme catalyses adenosine + H2O + H(+) = inosine + NH4(+). The catalysed reaction is 2'-deoxyadenosine + H2O + H(+) = 2'-deoxyinosine + NH4(+). In terms of biological role, catalyzes the hydrolytic deamination of adenosine and 2-deoxyadenosine. This Shewanella sp. (strain W3-18-1) protein is Adenosine deaminase.